A 378-amino-acid polypeptide reads, in one-letter code: Cytochrome P450 2C15 (378 aa).

Residue cysteine 323 coordinates heme.

This sequence belongs to the cytochrome P450 family. The cofactor is heme.

It localises to the endoplasmic reticulum membrane. Its subcellular location is the microsome membrane. The catalysed reaction is an organic molecule + reduced [NADPH--hemoprotein reductase] + O2 = an alcohol + oxidized [NADPH--hemoprotein reductase] + H2O + H(+). Its function is as follows. Cytochromes P450 are a group of heme-thiolate monooxygenases. In liver microsomes, this enzyme is involved in an NADPH-dependent electron transport pathway. It oxidizes a variety of structurally unrelated compounds, including steroids, fatty acids, and xenobiotics. This Oryctolagus cuniculus (Rabbit) protein is Cytochrome P450 2C15 (CYP2C15).